Consider the following 758-residue polypeptide: Relaxin receptor 1 (758 aa).

Over 1–408 (MTSGPFFFCV…LENLLASIIQ (408 aa)) the chain is Extracellular. Residues 26–63 (SCPLGSFPCGNISKCLPQLLHCNGVDDCGNQADEDNCG) enclose the LDL-receptor class A domain. 3 cysteine pairs are disulfide-bonded: cysteine 27-cysteine 40, cysteine 34-cysteine 53, and cysteine 47-cysteine 62. Asparagine 36 is a glycosylation site (N-linked (GlcNAc...) asparagine). Residues leucine 45, asparagine 48, valine 50, aspartate 52, aspartate 58, and glutamate 59 each contribute to the Ca(2+) site. LRR repeat units follow at residues 105–125 (LCRD…PSVS), 126–148 (SNVT…SFRK), 149–172 (YHDL…AFRG), 173–196 (LHSL…VFED), 198–220 (HRLE…TFYG), 221–244 (LNSL…PLCQ), 246–269 (MPRL…TFIS), 270–293 (CNNL…AFTH), 294–317 (LQKL…IFKD), 319–341 (KELS…QFDY), and 342–365 (LAKL…MFRP). N-linked (GlcNAc...) asparagine glycosylation is present at asparagine 127. Residues asparagine 264 and asparagine 272 are each glycosylated (N-linked (GlcNAc...) asparagine). Asparagine 325 is a glycosylation site (N-linked (GlcNAc...) asparagine). N-linked (GlcNAc...) asparagine glycosylation occurs at asparagine 368. The helical transmembrane segment at 409–429 (RVFVWVVSAITCFGNIFVICM) threads the bilayer. Residues 430 to 443 (RPYIRSENKLHAMS) lie on the Cytoplasmic side of the membrane. The chain crosses the membrane as a helical span at residues 444–464 (IMSLCCADCLMGVYLFVIGAF). Residues 465-486 (DLKFRGEYRKHAQPWMESVHCQ) are Extracellular-facing. The cysteines at positions 485 and 563 are disulfide-linked. The helical transmembrane segment at 487 to 507 (FMGSLAVLSTEVSVLLLTFLT) threads the bilayer. Topologically, residues 508-527 (LEKYICIVYPFRCLRPRKCR) are cytoplasmic. Residues 528-548 (TVAVLIFIWITGFIVAFAPLG) form a helical membrane-spanning segment. The Extracellular portion of the chain corresponds to 549 to 577 (NKEFFKNYYGTNGVCFPLHSEDTGSTGAQ). Residues 578-598 (IYSVVIFLGINLVAFIIIVFS) traverse the membrane as a helical segment. The Cytoplasmic portion of the chain corresponds to 599–629 (YGSMFYSVHQSTITATEIQKQVKKEMILAKR). Residues 630–650 (FFFIVFTDALCWIPIFILKFL) form a helical membrane-spanning segment. The Extracellular segment spans residues 651 to 660 (SLIRVEIPDT). A helical transmembrane segment spans residues 661–681 (ITSWVVIFILPINSALNPIIY). At 682 to 758 (TLTTRPFKEM…SRSSRLNSYS (77 aa)) the chain is on the cytoplasmic side.

This sequence belongs to the G-protein coupled receptor 1 family. In terms of assembly, interacts with C1QTNF8. As to expression, detected in brain cortex, and at low levels in testis.

The protein resides in the cell membrane. Receptor for relaxins. The activity of this receptor is mediated by G proteins leading to stimulation of adenylate cyclase and an increase of cAMP. Binding of the ligand may also activate a tyrosine kinase pathway that inhibits the activity of a phosphodiesterase that degrades cAMP. This Rattus norvegicus (Rat) protein is Relaxin receptor 1 (Rxfp1).